A 350-amino-acid chain; its full sequence is MIQIKNLKKEYRTNNTSNLVLDNINLEIKQGEIFGIIGHSGAGKSSLLRCLNLLEQPTDGSIFIADENITKKNSKQLREFRKKVAMIFQHFNLLSSRNVFENIALPLEIQGIPKSEIKKRVFELLDLVELPNKANAYPQELSGGQKQKVAIARALALNPLVLLSDEATSALDPTSTKQILALLKILNKELGLTIVLITHEMDVVRKICDRVAIIDKGRIAEMGKTLDVFLNPQAPVTRSFVETSIHTKVPDFIAKKLQDNPYSYDNTYPVVQLTFYGDKGKMPIIAEISRQFNATASIIQANIETIQDQIVGIAICHITGERQGWENALRFLSNQDVNLKVLGYATADNI.

The 240-residue stretch at 2-241 (IQIKNLKKEY…PQAPVTRSFV (240 aa)) folds into the ABC transporter domain. 38–45 (GHSGAGKS) contacts ATP.

Belongs to the ABC transporter superfamily. Methionine importer (TC 3.A.1.24) family. In terms of assembly, the complex is composed of two ATP-binding proteins (MetN), two transmembrane proteins (MetI) and a solute-binding protein (MetQ).

The protein localises to the cell inner membrane. It catalyses the reaction L-methionine(out) + ATP + H2O = L-methionine(in) + ADP + phosphate + H(+). The enzyme catalyses D-methionine(out) + ATP + H2O = D-methionine(in) + ADP + phosphate + H(+). Its function is as follows. Part of the ABC transporter complex MetNIQ involved in methionine import. Responsible for energy coupling to the transport system. The polypeptide is Methionine import ATP-binding protein MetN (Francisella tularensis subsp. tularensis (strain SCHU S4 / Schu 4)).